A 349-amino-acid polypeptide reads, in one-letter code: GMP reductase (349 aa).

108–131 (IDFLKIKKIFLLSSELKYICIDVA) lines the NADP(+) pocket. K(+) is bound by residues Gly-181 and Gly-183. Catalysis depends on Cys-186, which acts as the Thioimidate intermediate. 216 to 239 (IISDGGCTVSGDIAKAFGGGADFV) contacts NADP(+).

It belongs to the IMPDH/GMPR family. GuaC type 1 subfamily. Homotetramer.

It catalyses the reaction IMP + NH4(+) + NADP(+) = GMP + NADPH + 2 H(+). Functionally, catalyzes the irreversible NADPH-dependent deamination of GMP to IMP. It functions in the conversion of nucleobase, nucleoside and nucleotide derivatives of G to A nucleotides, and in maintaining the intracellular balance of A and G nucleotides. The chain is GMP reductase from Buchnera aphidicola subsp. Acyrthosiphon pisum (strain 5A).